Consider the following 348-residue polypeptide: Protein RecA (348 aa).

65–72 provides a ligand contact to ATP; it reads GPESSGKT. The disordered stretch occupies residues 328 to 348; the sequence is SKPQAETSARLATQEELADDY.

It belongs to the RecA family.

The protein localises to the cytoplasm. Functionally, can catalyze the hydrolysis of ATP in the presence of single-stranded DNA, the ATP-dependent uptake of single-stranded DNA by duplex DNA, and the ATP-dependent hybridization of homologous single-stranded DNAs. It interacts with LexA causing its activation and leading to its autocatalytic cleavage. In Ectopseudomonas oleovorans (Pseudomonas oleovorans), this protein is Protein RecA.